The sequence spans 534 residues: Bifunctional purine biosynthesis protein PurH (534 aa).

Residues 6-151 (TRLPVRRALI…KNHKDVAIVV (146 aa)) enclose the MGS-like domain.

Belongs to the PurH family.

It catalyses the reaction (6R)-10-formyltetrahydrofolate + 5-amino-1-(5-phospho-beta-D-ribosyl)imidazole-4-carboxamide = 5-formamido-1-(5-phospho-D-ribosyl)imidazole-4-carboxamide + (6S)-5,6,7,8-tetrahydrofolate. The enzyme catalyses IMP + H2O = 5-formamido-1-(5-phospho-D-ribosyl)imidazole-4-carboxamide. The protein operates within purine metabolism; IMP biosynthesis via de novo pathway; 5-formamido-1-(5-phospho-D-ribosyl)imidazole-4-carboxamide from 5-amino-1-(5-phospho-D-ribosyl)imidazole-4-carboxamide (10-formyl THF route): step 1/1. It participates in purine metabolism; IMP biosynthesis via de novo pathway; IMP from 5-formamido-1-(5-phospho-D-ribosyl)imidazole-4-carboxamide: step 1/1. The chain is Bifunctional purine biosynthesis protein PurH from Stutzerimonas stutzeri (strain A1501) (Pseudomonas stutzeri).